The following is a 72-amino-acid chain: Male-specific sperm protein Mst84Dd (72 aa).

Belongs to the MST(3)CGP family. As to expression, testis.

The polypeptide is Male-specific sperm protein Mst84Dd (Mst84Dd) (Drosophila melanogaster (Fruit fly)).